A 349-amino-acid polypeptide reads, in one-letter code: MARPQDPPRGFFPFGNPFKNLSSKNSVLSSKLLPLLNNFETNLASSISKLVPKEKSDILTVSWMKQAMESLCETHNGIKTLITDLELPVSDWEDKWVDVYLDISVKLLDLCNAFSSELTRLNQGHLLLQFALHNLEANSPQNLSKAQSSLDSWKQHIVSKNPRIENCRAILSSLVQTLNLPKVKNSAKGKVLMRALYGVKVKTLYISGVFAAAFSGSSQNLMYLTVSNELPWAQSFMEVQNTMNAEIKNIFLSDGLTVLKELEAVASGVKKLYPAIQQGSIDPISLQPLKDSVTELSNGIDLVSKEVDCFFKILLSGRDTLLENLRSMGASTLQATSPKKAAGKNYRGF.

A chloroplast-targeting transit peptide spans 1–43 (MARPQDPPRGFFPFGNPFKNLSSKNSVLSSKLLPLLNNFETNL).

In terms of tissue distribution, expressed in roots, hypocotyls, cotyledons, leaves, flowers and siliques.

Its subcellular location is the plastid. The protein localises to the chloroplast. Its function is as follows. Required for normal root and shoot development. Prevents constitutive production of a root mobile carotenoid-derived signaling compound that is capable of arresting shoot and leaf development. This is Protein BPS1, chloroplastic from Arabidopsis thaliana (Mouse-ear cress).